A 324-amino-acid chain; its full sequence is Olfactory receptor 52I1 (324 aa).

Topologically, residues Met-1–Leu-29 are extracellular. Asn-7 carries N-linked (GlcNAc...) asparagine glycosylation. Residues Trp-30–Val-50 form a helical membrane-spanning segment. The Cytoplasmic portion of the chain corresponds to Thr-51 to Thr-58. Residues Arg-59–Ser-79 form a helical membrane-spanning segment. The Extracellular segment spans residues Ser-80 to Thr-103. Cys-101 and Cys-193 are disulfide-bonded. The chain crosses the membrane as a helical span at residues Gln-104–Phe-124. Residues Asp-125–Gln-143 are Cytoplasmic-facing. The helical transmembrane segment at Val-144–Ser-164 threads the bilayer. At Trp-165–Ser-200 the chain is on the extracellular side. A helical transmembrane segment spans residues Leu-201–Ser-221. Residues Tyr-222 to Ala-241 lie on the Cytoplasmic side of the membrane. Residues Leu-242–Ser-262 traverse the membrane as a helical segment. Over Ile-263 to Gln-278 the chain is Extracellular. The chain crosses the membrane as a helical span at residues Val-279 to Met-299. At Arg-300 to Ser-324 the chain is on the cytoplasmic side.

It belongs to the G-protein coupled receptor 1 family.

It is found in the cell membrane. Odorant receptor. The sequence is that of Olfactory receptor 52I1 (OR52I1) from Homo sapiens (Human).